A 70-amino-acid chain; its full sequence is Delta-hexatoxin-Mg1b (70 aa).

An N-terminal signal peptide occupies residues Met1 to Arg26. Intrachain disulfides connect Cys27-Cys41, Cys34-Cys46, Cys40-Cys57, and Cys42-Cys68.

As to expression, expressed by the venom gland.

Its subcellular location is the secreted. In terms of biological role, inhibits tetrodotoxin-sensitive sodium channels (Nav). Intracranial injection into mice causes strong convulsions and death. Intrathorax injection into crickets causes paralysis prolonged for 2 minutes, followed by recovery. This chain is Delta-hexatoxin-Mg1b, found in Macrothele gigas (Japanese funnel web spider).